A 74-amino-acid polypeptide reads, in one-letter code: Large ribosomal subunit protein bL27c (74 aa).

This sequence belongs to the bacterial ribosomal protein bL27 family.

The protein resides in the plastid. It localises to the chloroplast. In Pleurochrysis haptonemofera (Unicellular marine alga), this protein is Large ribosomal subunit protein bL27c (rpl27).